The chain runs to 135 residues: Holo-[acyl-carrier-protein] synthase (135 aa).

Residues D7 and E57 each contribute to the Mg(2+) site.

The protein belongs to the P-Pant transferase superfamily. AcpS family. Mg(2+) serves as cofactor.

The protein localises to the cytoplasm. It carries out the reaction apo-[ACP] + CoA = holo-[ACP] + adenosine 3',5'-bisphosphate + H(+). Its function is as follows. Transfers the 4'-phosphopantetheine moiety from coenzyme A to a Ser of acyl-carrier-protein. In Corynebacterium glutamicum (strain R), this protein is Holo-[acyl-carrier-protein] synthase.